The chain runs to 428 residues: Zinc-type alcohol dehydrogenase B (428 aa).

Zn(2+) is bound by residues Cys116, His137, Cys167, Cys170, Cys173, and Cys181. Lys393 carries the N6-benzoyllysine modification.

The protein belongs to the zinc-containing alcohol dehydrogenase family. Class-III subfamily. As to quaternary structure, homodimer. The cofactor is Zn(2+). In terms of processing, benzoylation at lys-393 by gcnE leads to the activation od adhB.

It catalyses the reaction a primary alcohol + NAD(+) = an aldehyde + NADH + H(+). It carries out the reaction a secondary alcohol + NAD(+) = a ketone + NADH + H(+). Zinc-type alcohol dehydrogenase involved in development, secondary metabolism, pathogenicity, and stress response. Specifically controls the formation of sclerotia and the biosynthesis of aflatoxin. Contribute to seed colonization of A flavus on host maize seed. The protein is Zinc-type alcohol dehydrogenase B of Aspergillus flavus (strain ATCC 200026 / FGSC A1120 / IAM 13836 / NRRL 3357 / JCM 12722 / SRRC 167).